The chain runs to 430 residues: Histidinol dehydrogenase (430 aa).

Residues Ser-237, Gln-259, and His-262 each contribute to the substrate site. 2 residues coordinate Zn(2+): Gln-259 and His-262. Active-site proton acceptor residues include Glu-327 and His-328. Substrate is bound by residues His-328, Asp-361, Glu-415, and His-420. Asp-361 contributes to the Zn(2+) binding site. Residue His-420 participates in Zn(2+) binding.

Belongs to the histidinol dehydrogenase family. The cofactor is Zn(2+).

It catalyses the reaction L-histidinol + 2 NAD(+) + H2O = L-histidine + 2 NADH + 3 H(+). It participates in amino-acid biosynthesis; L-histidine biosynthesis; L-histidine from 5-phospho-alpha-D-ribose 1-diphosphate: step 9/9. In terms of biological role, catalyzes the sequential NAD-dependent oxidations of L-histidinol to L-histidinaldehyde and then to L-histidine. This is Histidinol dehydrogenase from Sulfurimonas denitrificans (strain ATCC 33889 / DSM 1251) (Thiomicrospira denitrificans (strain ATCC 33889 / DSM 1251)).